The primary structure comprises 304 residues: Putative AraC-like transcription regulator (304 aa).

The HTH araC/xylS-type domain maps to 202–300 (ATALTCLHRD…GMPPGDYRKH (99 aa)). DNA-binding regions (H-T-H motif) lie at residues 219–240 (ADLA…KATV) and 267–290 (LASI…KRVL).

The sequence is that of Putative AraC-like transcription regulator from Streptomyces lividans.